Reading from the N-terminus, the 544-residue chain is Methionine--tRNA ligase (544 aa).

The 'HIGH' region motif lies at 10–20; sequence PYANGSLHLGH. Positions 141, 144, 153, and 156 each coordinate Zn(2+). Residues 329 to 333 carry the 'KMSKS' region motif; that stretch reads KLSTS. T332 contacts ATP.

It belongs to the class-I aminoacyl-tRNA synthetase family. MetG type 1 subfamily. Monomer. It depends on Zn(2+) as a cofactor.

Its subcellular location is the cytoplasm. It catalyses the reaction tRNA(Met) + L-methionine + ATP = L-methionyl-tRNA(Met) + AMP + diphosphate. In terms of biological role, is required not only for elongation of protein synthesis but also for the initiation of all mRNA translation through initiator tRNA(fMet) aminoacylation. This is Methionine--tRNA ligase from Bacillus cereus (strain 03BB102).